The chain runs to 438 residues: Minor capsid protein p49 (438 aa).

The protein belongs to the asfivirus p49 structural protein family.

It localises to the virion. In terms of biological role, together with the penton and the other minor capsid proteins (M1249L, p17), forms a complicated network immediately below the outer capsid shell, stabilizing the whole capsid. Plays an essential role in the formation of infectious virus particles. Especially required for the formation of the capsid vertices. During virion assembly, associates with the membrane and probably mediates the docking of the penton complex to the inner membrane, where it recruits the capsomers to form the penton core. In Ornithodoros (relapsing fever ticks), this protein is Minor capsid protein p49.